The sequence spans 481 residues: MVRMTQKRYLEGQVYSVPLIQPDLRREEAVHQITDALQYLEMISTDIFTRVSESVEKNRAHLQSVTDRIKLAQARVQKIKGSKKATKVFSSAKYPAPEKLQDYSSIFTGAVDPASQKRPRIKVQSKLRPLDDKAQQEKLMYLPVCVNTKKRSEDETEEGLGSLPRNVNSVSSLLLFNTTENLYKKYVFLDPLAGAVTKTHTTLETEKEDKPFDAPLSITKREQLERQTAENYFYVPDLGQVPEIDVPSYLPDLPGIADDLMYSADLGPGFAPSVPASNSIPELPSFGTDHDESSGSDSQFKLEAPPPPPPPPPPPPEPTHVPVPPPGTSAAPPPPPPPPPMTADNTDASSPAPPTGTVKGAPSEVVQPSNGRASLLESIRNAGGIGKANLRNVKERKMEKKKQKEQEQVGATVSGGDLMSDLFNKLAMRRKGISGKGPAGQGDSSEAPASSGGAFARMSDVIPPLPAPQQSAADDEDDWEA.

Residues 1-54 (MVRMTQKRYLEGQVYSVPLIQPDLRREEAVHQITDALQYLEMISTDIFTRVSES) form a required for WASH complex assembly region. Disordered stretches follow at residues 273–417 (SVPA…SGGD) and 429–481 (RRKG…DWEA). Positions 304–341 (APPPPPPPPPPPPEPTHVPVPPPGTSAAPPPPPPPPPM) are enriched in pro residues. Residues 359 to 481 (KGAPSEVVQP…AADDEDDWEA (123 aa)) are VCA. In terms of domain architecture, WH2 spans 371–393 (GRASLLESIRNAGGIGKANLRNV). Positions 392–407 (NVKERKMEKKKQKEQE) are enriched in basic and acidic residues.

It belongs to the WASH1 family. In terms of assembly, component of the WASH complex.

It is found in the early endosome membrane. The protein localises to the recycling endosome membrane. Functionally, acts as a nucleation-promoting factor at the surface of endosomes, where it recruits and activates the Arp2/3 complex to induce actin polymerization, playing a key role in the fission of tubules that serve as transport intermediates during endosome sorting. The polypeptide is WASH complex subunit 1 (Danio rerio (Zebrafish)).